The chain runs to 230 residues: 2,3-bisphosphoglycerate-dependent phosphoglycerate mutase (230 aa).

Substrate-binding positions include 8-15 (RHGESEWN), 21-22 (TG), Arg60, 87-90 (ERHY), Lys98, 114-115 (RR), and 183-184 (GN). His9 acts as the Tele-phosphohistidine intermediate in catalysis. Glu87 functions as the Proton donor/acceptor in the catalytic mechanism.

The protein belongs to the phosphoglycerate mutase family. BPG-dependent PGAM subfamily.

The catalysed reaction is (2R)-2-phosphoglycerate = (2R)-3-phosphoglycerate. The protein operates within carbohydrate degradation; glycolysis; pyruvate from D-glyceraldehyde 3-phosphate: step 3/5. Catalyzes the interconversion of 2-phosphoglycerate and 3-phosphoglycerate. The chain is 2,3-bisphosphoglycerate-dependent phosphoglycerate mutase from Streptococcus gordonii (strain Challis / ATCC 35105 / BCRC 15272 / CH1 / DL1 / V288).